A 375-amino-acid chain; its full sequence is 23S rRNA (uracil(747)-C(5))-methyltransferase RlmC (375 aa).

The [4Fe-4S] cluster site is built by cysteine 3, cysteine 11, cysteine 14, and cysteine 87. Residues glutamine 212, phenylalanine 241, glutamate 262, and asparagine 307 each contribute to the S-adenosyl-L-methionine site. Cysteine 334 functions as the Nucleophile in the catalytic mechanism.

Belongs to the class I-like SAM-binding methyltransferase superfamily. RNA M5U methyltransferase family. RlmC subfamily.

It catalyses the reaction uridine(747) in 23S rRNA + S-adenosyl-L-methionine = 5-methyluridine(747) in 23S rRNA + S-adenosyl-L-homocysteine + H(+). In terms of biological role, catalyzes the formation of 5-methyl-uridine at position 747 (m5U747) in 23S rRNA. The chain is 23S rRNA (uracil(747)-C(5))-methyltransferase RlmC from Salmonella paratyphi A (strain ATCC 9150 / SARB42).